Here is a 172-residue protein sequence, read N- to C-terminus: Large ribosomal subunit protein bL21m (172 aa).

The N-terminal 20 residues, 1 to 20 (MIRNIGSNLMKSSSSILLRN), are a transit peptide targeting the mitochondrion.

Belongs to the bacterial ribosomal protein bL21 family.

The protein localises to the mitochondrion. In Dictyostelium discoideum (Social amoeba), this protein is Large ribosomal subunit protein bL21m (mrpl21).